A 523-amino-acid chain; its full sequence is GMP synthase [glutamine-hydrolyzing] (523 aa).

Residues 8–205 (KILILDFGSQ…VVNICGCETK (198 aa)) form the Glutamine amidotransferase type-1 domain. Catalysis depends on C85, which acts as the Nucleophile. Catalysis depends on residues H179 and E181. Positions 206–398 (WTAENIIEDA…LGLPAEMLNR (193 aa)) constitute a GMPS ATP-PPase domain. 233 to 239 (SGGVDSS) is a binding site for ATP.

As to quaternary structure, homodimer.

The enzyme catalyses XMP + L-glutamine + ATP + H2O = GMP + L-glutamate + AMP + diphosphate + 2 H(+). It functions in the pathway purine metabolism; GMP biosynthesis; GMP from XMP (L-Gln route): step 1/1. Its function is as follows. Catalyzes the synthesis of GMP from XMP. The polypeptide is GMP synthase [glutamine-hydrolyzing] (Glaesserella parasuis serovar 5 (strain SH0165) (Haemophilus parasuis)).